The following is a 677-amino-acid chain: Penicillin-binding protein activator LpoA (677 aa).

A signal peptide spans 1–26; the sequence is MLPSKIVRHKAGRFVPVLLAGLILAA. The N-palmitoyl cysteine moiety is linked to residue cysteine 27. Cysteine 27 carries the S-diacylglycerol cysteine lipid modification. The tract at residues 309-359 is disordered; sequence QPADANAVVSPSANPAAAQQSGTAQQPATTQQQPQQQPAAEPASNAQVKVY. Residues 313–355 are compositionally biased toward low complexity; sequence ANAVVSPSANPAAAQQSGTAQQPATTQQQPQQQPAAEPASNAQ.

It belongs to the LpoA family. Interacts with PBP1a.

It is found in the cell outer membrane. In terms of biological role, regulator of peptidoglycan synthesis that is essential for the function of penicillin-binding protein 1A (PBP1a). This chain is Penicillin-binding protein activator LpoA, found in Pantoea ananatis (strain LMG 20103).